A 592-amino-acid chain; its full sequence is Glutathione-regulated potassium-efflux system protein KefB (592 aa).

Helical transmembrane passes span 4–24 (SDFLLAGVLFLFAAVAAVPLA), 29–49 (IGAVLGYLLAGIAIGPWGLGF), 55–75 (EILHFSELGVVFLMFIIGLEL), 87–107 (IFGVGAAQVLLSAALLAGLLM), 115–135 (AAVVGGIGLAMSSTAMALQLM), 152–172 (VLLFQDLAVIPALALVPLLAG), 177–197 (HFDWMKIGMKVLAFVGMLIGG), 207–227 (FIAASGVREVFTAATLLLVLG), 230–250 (LFMDALGLSMALGTFIAGVLL), 268–288 (GLLLGLFFISVGMSLNLGVLY), 291–311 (LLWVVISVVVLVAVKILVLYL), 324–344 (MQFAGVLSQGGEFAFVLFSTA), and 356–376 (ALLLVTVTLSMMTTPLLMKLV). The region spanning 400 to 519 (KPQVIVVGFG…AGVTQFSRET (120 aa)) is the RCK N-terminal domain.

The protein belongs to the monovalent cation:proton antiporter 2 (CPA2) transporter (TC 2.A.37) family. KefB subfamily. As to quaternary structure, interacts with the regulatory subunit KefG.

Its subcellular location is the cell inner membrane. Functionally, pore-forming subunit of a potassium efflux system that confers protection against electrophiles. Catalyzes K(+)/H(+) antiport. The sequence is that of Glutathione-regulated potassium-efflux system protein KefB from Escherichia coli O157:H7.